Here is a 150-residue protein sequence, read N- to C-terminus: uncharacterized protein (150 aa).

An N-terminal signal peptide occupies residues 1–21 (MAMEMAMMGLLGTVVGASAMG).

This is an uncharacterized protein from Mycobacterium tuberculosis (strain CDC 1551 / Oshkosh).